Reading from the N-terminus, the 209-residue chain is Molybdenum cofactor guanylyltransferase (209 aa).

Residues 14–16 (LAG), lysine 31, and aspartate 104 contribute to the GTP site. Aspartate 104 is a binding site for Mg(2+).

It belongs to the MobA family. Monomer. Mg(2+) is required as a cofactor.

The protein resides in the cytoplasm. It catalyses the reaction Mo-molybdopterin + GTP + H(+) = Mo-molybdopterin guanine dinucleotide + diphosphate. In terms of biological role, transfers a GMP moiety from GTP to Mo-molybdopterin (Mo-MPT) cofactor (Moco or molybdenum cofactor) to form Mo-molybdopterin guanine dinucleotide (Mo-MGD) cofactor. This is Molybdenum cofactor guanylyltransferase from Helicobacter pylori (strain J99 / ATCC 700824) (Campylobacter pylori J99).